Here is a 119-residue protein sequence, read N- to C-terminus: Holo-[acyl-carrier-protein] synthase (119 aa).

Asp7 and Glu53 together coordinate Mg(2+).

It belongs to the P-Pant transferase superfamily. AcpS family. Mg(2+) is required as a cofactor.

The protein resides in the cytoplasm. The catalysed reaction is apo-[ACP] + CoA = holo-[ACP] + adenosine 3',5'-bisphosphate + H(+). Its function is as follows. Transfers the 4'-phosphopantetheine moiety from coenzyme A to a Ser of acyl-carrier-protein. In Dehalococcoides mccartyi (strain ATCC BAA-2266 / KCTC 15142 / 195) (Dehalococcoides ethenogenes (strain 195)), this protein is Holo-[acyl-carrier-protein] synthase.